Reading from the N-terminus, the 625-residue chain is 1-deoxy-D-xylulose-5-phosphate synthase (625 aa).

Thiamine diphosphate-binding positions include H80 and 121-123; that span reads GHS. D152 is a Mg(2+) binding site. Residues 153–154, N181, Y290, and E371 contribute to the thiamine diphosphate site; that span reads GS. Position 181 (N181) interacts with Mg(2+).

The protein belongs to the transketolase family. DXPS subfamily. As to quaternary structure, homodimer. Requires Mg(2+) as cofactor. The cofactor is thiamine diphosphate.

The enzyme catalyses D-glyceraldehyde 3-phosphate + pyruvate + H(+) = 1-deoxy-D-xylulose 5-phosphate + CO2. The protein operates within metabolic intermediate biosynthesis; 1-deoxy-D-xylulose 5-phosphate biosynthesis; 1-deoxy-D-xylulose 5-phosphate from D-glyceraldehyde 3-phosphate and pyruvate: step 1/1. In terms of biological role, catalyzes the acyloin condensation reaction between C atoms 2 and 3 of pyruvate and glyceraldehyde 3-phosphate to yield 1-deoxy-D-xylulose-5-phosphate (DXP). In Haemophilus influenzae (strain PittGG), this protein is 1-deoxy-D-xylulose-5-phosphate synthase.